Reading from the N-terminus, the 524-residue chain is Histidine ammonia-lyase (524 aa).

The segment at residues 139–141 (ASG) is a cross-link (5-imidazolinone (Ala-Gly)). Ser-140 is subject to 2,3-didehydroalanine (Ser). The tract at residues 500-524 (ADTQAPAPAKLPDSGDEDRDTTSRH) is disordered.

Belongs to the PAL/histidase family. Post-translationally, contains an active site 4-methylidene-imidazol-5-one (MIO), which is formed autocatalytically by cyclization and dehydration of residues Ala-Ser-Gly.

The protein resides in the cytoplasm. It carries out the reaction L-histidine = trans-urocanate + NH4(+). Its pathway is amino-acid degradation; L-histidine degradation into L-glutamate; N-formimidoyl-L-glutamate from L-histidine: step 1/3. The sequence is that of Histidine ammonia-lyase (hutH) from Deinococcus radiodurans (strain ATCC 13939 / DSM 20539 / JCM 16871 / CCUG 27074 / LMG 4051 / NBRC 15346 / NCIMB 9279 / VKM B-1422 / R1).